The primary structure comprises 172 residues: Lytic chitin monooxygenase (172 aa).

Positions 1 to 30 are cleaved as a signal peptide; the sequence is MHAGRKTAVLIGAALAPVIAVSLPAASASA. Cu cation is bound by residues His31 and His106. The 138-residue stretch at 31–168 folds into the Chitin-binding type-4 domain; sequence HGYISNPPSR…DNAFYACIDV (138 aa).

It depends on Cu(2+) as a cofactor.

It localises to the secreted. It carries out the reaction [(1-&gt;4)-N-acetyl-beta-D-glucosaminyl]n+m + reduced acceptor + O2 = [(1-&gt;4)-N-acetyl-beta-D-glucosaminyl]m-1-(1-&gt;4)-2-(acetylamino)-2-deoxy-D-glucono-1,5-lactone + [(1-&gt;4)-N-acetyl-beta-D-glucosaminyl]n + acceptor + H2O.. It participates in glycan degradation; chitin degradation. In terms of biological role, involved in chitin degradation. Catalyzes the oxidative cleavage of glycosidic bonds in chitin via a copper-dependent mechanism, leading to oxidized chitooligomers with degrees of polymerization of 4-6. Is not active on cellulose. The polypeptide is Lytic chitin monooxygenase (Streptomyces ambofaciens (strain ATCC 23877 / 3486 / DSM 40053 / JCM 4204 / NBRC 12836 / NRRL B-2516)).